The following is a 245-amino-acid chain: 1-(5-phosphoribosyl)-5-[(5-phosphoribosylamino)methylideneamino] imidazole-4-carboxamide isomerase (245 aa).

The active-site Proton acceptor is D8. D130 (proton donor) is an active-site residue.

It belongs to the HisA/HisF family.

Its subcellular location is the cytoplasm. The catalysed reaction is 1-(5-phospho-beta-D-ribosyl)-5-[(5-phospho-beta-D-ribosylamino)methylideneamino]imidazole-4-carboxamide = 5-[(5-phospho-1-deoxy-D-ribulos-1-ylimino)methylamino]-1-(5-phospho-beta-D-ribosyl)imidazole-4-carboxamide. It participates in amino-acid biosynthesis; L-histidine biosynthesis; L-histidine from 5-phospho-alpha-D-ribose 1-diphosphate: step 4/9. The chain is 1-(5-phosphoribosyl)-5-[(5-phosphoribosylamino)methylideneamino] imidazole-4-carboxamide isomerase from Pseudomonas putida (strain ATCC 700007 / DSM 6899 / JCM 31910 / BCRC 17059 / LMG 24140 / F1).